The sequence spans 441 residues: MSRPVVAIVGRPNVGKSTLFNALAGERISIVKDTPGVTRDRIYADVSWLDYNFTMIDTGGIEPESGDVILSQMREQAQIAIDTADVIIFITDVKQGLVDSDSKVADMLRRSHKPVVLVVNKVDSFEKYMTDVYEFYNLGIGDPHPISAASMLGLGDMLDEVVKHFPDSSKQDDEDDRPRVAIVGKPNVGKSSLINKLAREDRVIVSDIAGTTRDAIDTAIKYDGKEYIFIDTAGLRRKNKIKEDIERYSIIRAVSAVERADVVIVVIDATEGVTEQDAKIAGIAHERGKGIIIAVNKWDAIEKDNNTVKQHTEKIRQILSFIPYAEILFISAKSGQRLNKIFELIDVVIENNSMRVATGVLNEIVTEAVAMQQPPTDKGKRLKIYYVTQVSVKPPTFVIFVNDKNLMHFSYTRYLENRIRDTFGFRGTALKFITRERKENE.

EngA-type G domains are found at residues proline 4–serine 169 and proline 178–serine 353. GTP contacts are provided by residues glycine 10–serine 17, aspartate 57–isoleucine 61, asparagine 120–aspartate 123, glycine 184–serine 191, aspartate 231–leucine 235, and asparagine 296–aspartate 299. One can recognise a KH-like domain in the interval methionine 354–lysine 438.

The protein belongs to the TRAFAC class TrmE-Era-EngA-EngB-Septin-like GTPase superfamily. EngA (Der) GTPase family. In terms of assembly, associates with the 50S ribosomal subunit.

GTPase that plays an essential role in the late steps of ribosome biogenesis. This chain is GTPase Der, found in Agathobacter rectalis (strain ATCC 33656 / DSM 3377 / JCM 17463 / KCTC 5835 / VPI 0990) (Eubacterium rectale).